The following is a 210-amino-acid chain: 3-demethoxyubiquinol 3-hydroxylase (210 aa).

The Fe cation site is built by Glu-59, Glu-89, His-92, Glu-141, Glu-173, and His-176.

It belongs to the COQ7 family. Requires Fe cation as cofactor.

It is found in the cell membrane. The catalysed reaction is a 5-methoxy-2-methyl-3-(all-trans-polyprenyl)benzene-1,4-diol + AH2 + O2 = a 3-demethylubiquinol + A + H2O. The protein operates within cofactor biosynthesis; ubiquinone biosynthesis. Its function is as follows. Catalyzes the hydroxylation of 2-nonaprenyl-3-methyl-6-methoxy-1,4-benzoquinol during ubiquinone biosynthesis. In Albidiferax ferrireducens (strain ATCC BAA-621 / DSM 15236 / T118) (Rhodoferax ferrireducens), this protein is 3-demethoxyubiquinol 3-hydroxylase.